Consider the following 802-residue polypeptide: DSC E3 ubiquitin ligase complex subunit A (802 aa).

The signal sequence occupies residues 1–22 (MDNRGSFFFLLIVFYLLLSSQS). At 23–381 (RPPLLDQDRE…TGPKIEEYDK (359 aa)) the chain is on the lumenal side. N-linked (GlcNAc...) asparagine glycans are attached at residues N48, N71, N115, N126, N148, and N166. Residues 382–402 (YSARLVFIICGVFAAQITLLL) traverse the membrane as a helical segment. At 403–429 (RQIKEASTPSTRSRISFYTIALMAFGD) the chain is on the cytoplasmic side. Residues 430–450 (AFVLIFILLELYPAVSFLVMA) form a helical membrane-spanning segment. Residues 451–453 (TAA) are Lumenal-facing. Residues 454 to 474 (FLTFLSVSYIGMKFMMEIWAV) form a helical membrane-spanning segment. Over 475-550 (QAPERREQER…QETRNDVGAM (76 aa)) the chain is Cytoplasmic. A disordered region spans residues 478–541 (ERREQERRSN…TNRGTTSAAQ (64 aa)). Over residues 532–541 (TNRGTTSAAQ) the composition is skewed to polar residues. Residues 551-571 (YARFYFVLFVMLIISIWSFLW) traverse the membrane as a helical segment. Residues 572–574 (PNR) lie on the Lumenal side of the membrane. The chain crosses the membrane as a helical span at residues 575–595 (LGALYARALAFVYLSFWTPQI). At 596–608 (GRNIIRNCRKALR) the chain is on the cytoplasmic side. Residues 609–629 (WDFVIGQSILRLFPFVYFLTV) form a helical membrane-spanning segment. The Lumenal segment spans residues 630 to 642 (RGNVLFIHPDTTT). A helical transmembrane segment spans residues 643–663 (AFALAGWVWIQVWVLASQDIL). Residues 664-802 (GPRFFVPRGW…PICRESIPPV (139 aa)) lie on the Cytoplasmic side of the membrane. Residues 732 to 796 (CAICMQEIEV…RLRLQCPICR (65 aa)) form an RING-type; atypical zinc finger.

In terms of assembly, component of the DSC E3 ubiquitin ligase complex composed of dscA, dscB, dscC and dscD.

It is found in the endoplasmic reticulum membrane. The enzyme catalyses S-ubiquitinyl-[E2 ubiquitin-conjugating enzyme]-L-cysteine + [acceptor protein]-L-lysine = [E2 ubiquitin-conjugating enzyme]-L-cysteine + N(6)-ubiquitinyl-[acceptor protein]-L-lysine.. It participates in protein modification; protein ubiquitination. Catalytic component of the DSC E3 ubiquitin ligase complex which is required for the srbA transcriptional activator proteolytic cleavage to release the soluble transcription factor from the membrane in low oxygen or sterol conditions. Required for growth during hypoxia and triazole drug susceptibility, as well as for virulence in a murine model of invasive pulmonary aspergillosis (IPA). The chain is DSC E3 ubiquitin ligase complex subunit A from Aspergillus fumigatus (strain CBS 144.89 / FGSC A1163 / CEA10) (Neosartorya fumigata).